A 180-amino-acid chain; its full sequence is ATP synthase subunit delta (180 aa).

It belongs to the ATPase delta chain family. As to quaternary structure, F-type ATPases have 2 components, F(1) - the catalytic core - and F(0) - the membrane proton channel. F(1) has five subunits: alpha(3), beta(3), gamma(1), delta(1), epsilon(1). F(0) has three main subunits: a(1), b(2) and c(10-14). The alpha and beta chains form an alternating ring which encloses part of the gamma chain. F(1) is attached to F(0) by a central stalk formed by the gamma and epsilon chains, while a peripheral stalk is formed by the delta and b chains.

The protein localises to the cell membrane. Functionally, f(1)F(0) ATP synthase produces ATP from ADP in the presence of a proton or sodium gradient. F-type ATPases consist of two structural domains, F(1) containing the extramembraneous catalytic core and F(0) containing the membrane proton channel, linked together by a central stalk and a peripheral stalk. During catalysis, ATP synthesis in the catalytic domain of F(1) is coupled via a rotary mechanism of the central stalk subunits to proton translocation. This protein is part of the stalk that links CF(0) to CF(1). It either transmits conformational changes from CF(0) to CF(1) or is implicated in proton conduction. In Limosilactobacillus reuteri (strain DSM 20016) (Lactobacillus reuteri), this protein is ATP synthase subunit delta.